A 168-amino-acid polypeptide reads, in one-letter code: HTH-type transcriptional regulator IscR (168 aa).

Positions 2–131 (KLTSKGRYAV…NNITLGELMS (130 aa)) constitute an HTH rrf2-type domain. The H-T-H motif DNA-binding region spans 28–51 (LADISERQGISLSYLEQLFSKLRK). [2Fe-2S] cluster is bound by residues C92, C98, and C104.

It depends on [2Fe-2S] cluster as a cofactor.

Regulates the transcription of several operons and genes involved in the biogenesis of Fe-S clusters and Fe-S-containing proteins. The chain is HTH-type transcriptional regulator IscR from Vibrio vulnificus (strain CMCP6).